A 203-amino-acid polypeptide reads, in one-letter code: Octanoyltransferase (203 aa).

A BPL/LPL catalytic domain is found at 30 to 203 (EDQDNYFFIT…HIIKEGRKLV (174 aa)). Substrate is bound by residues 69–76 (RGGSVTFH), 135–137 (SVG), and 148–150 (GIS). The Acyl-thioester intermediate role is filled by Cys166.

The protein belongs to the LipB family.

Its subcellular location is the cytoplasm. The catalysed reaction is octanoyl-[ACP] + L-lysyl-[protein] = N(6)-octanoyl-L-lysyl-[protein] + holo-[ACP] + H(+). It participates in protein modification; protein lipoylation via endogenous pathway; protein N(6)-(lipoyl)lysine from octanoyl-[acyl-carrier-protein]: step 1/2. In terms of biological role, catalyzes the transfer of endogenously produced octanoic acid from octanoyl-acyl-carrier-protein onto the lipoyl domains of lipoate-dependent enzymes. Lipoyl-ACP can also act as a substrate although octanoyl-ACP is likely to be the physiological substrate. This chain is Octanoyltransferase, found in Persephonella marina (strain DSM 14350 / EX-H1).